Here is a 28-residue protein sequence, read N- to C-terminus: MSEARNLFTTFGILAILLFFLYLIYAVL.

Residues 7–27 form a helical membrane-spanning segment; that stretch reads LFTTFGILAILLFFLYLIYAV.

As to quaternary structure, interacts with SERCA. In terms of tissue distribution, strongly expressed in embryonic and larval somatic muscles and postembryonic heart.

Its subcellular location is the sarcoplasmic reticulum membrane. The protein localises to the cell membrane. The protein resides in the sarcolemma. It localises to the T-tubule. In terms of biological role, plays an essential role in the regulation of calcium transport at the sarcoplasmic reticulum (SR), which is secondarily required for regular muscle contraction. This is Sarcolamban A from Drosophila melanogaster (Fruit fly).